A 182-amino-acid polypeptide reads, in one-letter code: Peptide deformylase (182 aa).

Cysteine 100 and histidine 142 together coordinate Fe cation. Glutamate 143 is a catalytic residue. Histidine 146 contacts Fe cation.

The protein belongs to the polypeptide deformylase family. The cofactor is Fe(2+).

The enzyme catalyses N-terminal N-formyl-L-methionyl-[peptide] + H2O = N-terminal L-methionyl-[peptide] + formate. Removes the formyl group from the N-terminal Met of newly synthesized proteins. Requires at least a dipeptide for an efficient rate of reaction. N-terminal L-methionine is a prerequisite for activity but the enzyme has broad specificity at other positions. This Bartonella bacilliformis (strain ATCC 35685 / KC583 / Herrer 020/F12,63) protein is Peptide deformylase.